A 363-amino-acid chain; its full sequence is Peptide chain release factor 1 (363 aa).

Gln237 carries the post-translational modification N5-methylglutamine. A compositionally biased stretch (basic and acidic residues) spans 284-296 (EDEKRRSAEESTR). The disordered stretch occupies residues 284–306 (EDEKRRSAEESTRRSLVASGDRS).

It belongs to the prokaryotic/mitochondrial release factor family. Methylated by PrmC. Methylation increases the termination efficiency of RF1.

It localises to the cytoplasm. Its function is as follows. Peptide chain release factor 1 directs the termination of translation in response to the peptide chain termination codons UAG and UAA. The chain is Peptide chain release factor 1 from Shewanella oneidensis (strain ATCC 700550 / JCM 31522 / CIP 106686 / LMG 19005 / NCIMB 14063 / MR-1).